A 290-amino-acid chain; its full sequence is ORF2/4 protein (290 aa).

Residues 67-218 (LPAAPEAPGD…KSRYQPYLVT (152 aa)) form a disordered region. A compositionally biased stretch (basic and acidic residues) spans 121–130 (RPQETQEGHR). The span at 181–190 (AAQAAAAATA) shows a compositional bias: low complexity. The segment covering 191-200 (NPGSQTQTPV) has biased composition (polar residues).

This chain is ORF2/4 protein, found in Torque teno virus (isolate Human/Japan/TRM1/1999) (TTV).